Reading from the N-terminus, the 201-residue chain is Recombination protein RecR (201 aa).

Residues 60-75 form a C4-type zinc finger; that stretch reads CSRCFHFTDAEECSIC. The Toprim domain occupies 83–178; it reads GEICVVETTA…RVSRIAYGIP (96 aa).

This sequence belongs to the RecR family.

Its function is as follows. May play a role in DNA repair. It seems to be involved in an RecBC-independent recombinational process of DNA repair. It may act with RecF and RecO. The sequence is that of Recombination protein RecR from Syntrophobacter fumaroxidans (strain DSM 10017 / MPOB).